A 325-amino-acid chain; its full sequence is UPF0285 protein MmarC7_1666 (325 aa).

It belongs to the UPF0285 family.

This is UPF0285 protein MmarC7_1666 from Methanococcus maripaludis (strain C7 / ATCC BAA-1331).